Here is a 203-residue protein sequence, read N- to C-terminus: CASP-like protein 1B1 (203 aa).

The Cytoplasmic portion of the chain corresponds to 1 to 24; that stretch reads MALVNAEKPEVGSSPSSLGPRNKS. A helical membrane pass occupies residues 25 to 45; that stretch reads WVLLMLRFVAFLATAAATIVM. Residues 46-76 lie on the Extracellular side of the membrane; it reads AANRETKTFVVATIGSTPIKATVTAKFQHTP. Residues 77-97 traverse the membrane as a helical segment; the sequence is AFVFFVIANGMGSIHNLVMIA. The Cytoplasmic segment spans residues 98 to 114; that stretch reads GDTFVRKFDYKGLRWVT. The helical transmembrane segment at 115–135 threads the bilayer; the sequence is VAILDMLTAALISGGVNAAVF. The Extracellular segment spans residues 136-165; the sequence is MAELGKNGNSHAKWNKICDRFGSFCDHGGA. The chain crosses the membrane as a helical span at residues 166-186; it reads AIIASFIGLLLMLVISIISII. The Cytoplasmic segment spans residues 187–203; sequence KLLKPKSPLVDSHVLAP.

This sequence belongs to the Casparian strip membrane proteins (CASP) family. In terms of assembly, homodimer and heterodimers.

The protein resides in the cell membrane. In Ricinus communis (Castor bean), this protein is CASP-like protein 1B1.